The sequence spans 569 residues: Urease subunit alpha (569 aa).

The region spanning Gly-131 to Leu-569 is the Urease domain. Residues His-136, His-138, and Lys-219 each coordinate Ni(2+). Lys-219 is subject to N6-carboxylysine. His-221 serves as a coordination point for substrate. Ni(2+) contacts are provided by His-248 and His-274. His-322 serves as the catalytic Proton donor. Residue Asp-362 coordinates Ni(2+).

This sequence belongs to the metallo-dependent hydrolases superfamily. Urease alpha subunit family. As to quaternary structure, heterotrimer of UreA (gamma), UreB (beta) and UreC (alpha) subunits. Three heterotrimers associate to form the active enzyme. Requires Ni cation as cofactor. In terms of processing, carboxylation allows a single lysine to coordinate two nickel ions.

It is found in the cytoplasm. The enzyme catalyses urea + 2 H2O + H(+) = hydrogencarbonate + 2 NH4(+). It functions in the pathway nitrogen metabolism; urea degradation; CO(2) and NH(3) from urea (urease route): step 1/1. This is Urease subunit alpha from Parasynechococcus marenigrum (strain WH8102).